Consider the following 373-residue polypeptide: Lipoyl synthase, mitochondrial (373 aa).

A mitochondrion-targeting transit peptide spans 1-26; sequence MALRCWDAARSLGSRIFGRYACSVRA. Positions 105, 110, 116, 136, 140, 143, and 351 each coordinate [4Fe-4S] cluster. The Radical SAM core domain occupies 121-340; sequence EYATATATIM…EEVGNELGFH (220 aa).

It belongs to the radical SAM superfamily. Lipoyl synthase family. [4Fe-4S] cluster serves as cofactor.

It is found in the mitochondrion. It carries out the reaction [[Fe-S] cluster scaffold protein carrying a second [4Fe-4S](2+) cluster] + N(6)-octanoyl-L-lysyl-[protein] + 2 oxidized [2Fe-2S]-[ferredoxin] + 2 S-adenosyl-L-methionine + 4 H(+) = [[Fe-S] cluster scaffold protein] + N(6)-[(R)-dihydrolipoyl]-L-lysyl-[protein] + 4 Fe(3+) + 2 hydrogen sulfide + 2 5'-deoxyadenosine + 2 L-methionine + 2 reduced [2Fe-2S]-[ferredoxin]. The protein operates within protein modification; protein lipoylation via endogenous pathway; protein N(6)-(lipoyl)lysine from octanoyl-[acyl-carrier-protein]: step 2/2. Its function is as follows. Catalyzes the radical-mediated insertion of two sulfur atoms into the C-6 and C-8 positions of the octanoyl moiety bound to the lipoyl domains of lipoate-dependent enzymes, thereby converting the octanoylated domains into lipoylated derivatives. This chain is Lipoyl synthase, mitochondrial (Lias), found in Rattus norvegicus (Rat).